The sequence spans 187 residues: Elongation factor P (187 aa).

It belongs to the elongation factor P family.

It localises to the cytoplasm. It participates in protein biosynthesis; polypeptide chain elongation. Functionally, involved in peptide bond synthesis. Stimulates efficient translation and peptide-bond synthesis on native or reconstituted 70S ribosomes in vitro. Probably functions indirectly by altering the affinity of the ribosome for aminoacyl-tRNA, thus increasing their reactivity as acceptors for peptidyl transferase. This is Elongation factor P from Rhodococcus jostii (strain RHA1).